Reading from the N-terminus, the 356-residue chain is Probable methyltransferase-like protein 15 homolog (356 aa).

S-adenosyl-L-methionine contacts are provided by residues 55–57 (GGH), aspartate 74, phenylalanine 103, aspartate 126, and glutamine 133.

This sequence belongs to the methyltransferase superfamily. RsmH family.

Probable S-adenosyl-L-methionine-dependent methyltransferase. This Drosophila melanogaster (Fruit fly) protein is Probable methyltransferase-like protein 15 homolog.